We begin with the raw amino-acid sequence, 402 residues long: MTVTLCSPTEDDWPGMFLLAAASFTDFIGPESATAWRTLVPTDGAVVVRDGAGPGSEVVGMALYMDLRLTVPGEVVLPTAGLSFVAVAPTHRRRGLLRAMCAELHRRIADSGYPVAALHASEGGIYGRFGYGPATTLHELTVDRRFARFHADAPGGGLGGSSVRLVRPTEHRGEFEAIYERWRQQVPGGLLRPQVLWDELLAECKAAPGGDRESFALLHPDGYALYRVDRTDLKLARVSELRAVTADAHCALWRALIGLDSMERISIITHPQDPLPHLLTDTRLARTTWRQDGLWLRIMNVPAALEARGYAHEVGEFSTVLEVSDGGRFALKIGDGRARCTPTDAAAEIEMDRDVLGSLYLGAHRASTLAAANRLRTKDSQLLRRLDAAFASDVPVQTAFEF.

The 152-residue stretch at 3-154 folds into the N-acetyltransferase domain; that stretch reads VTLCSPTEDD…RFARFHADAP (152 aa). Residues 85–87, 93–98, and 121–122 contribute to the acetyl-CoA site; these read VAV, RRGLLR, and SE. Tyr126 serves as the catalytic Proton donor. Phe402 serves as the catalytic Proton acceptor; via carboxylate.

It belongs to the acetyltransferase Eis family. Homohexamer; trimer of dimers.

It localises to the secreted. Its subcellular location is the host cytoplasmic vesicle. It is found in the host phagosome. The protein resides in the extracellular vesicle. The protein localises to the bacterial extracellular vesicle. It localises to the host extracellular space. It carries out the reaction L-lysyl-[protein] + acetyl-CoA = N(6)-acetyl-L-lysyl-[protein] + CoA + H(+). Functionally, effector that is released into the host cell and affects host immune responses. Acts as an acetyltransferase that acetylates lysine residues of host proteins. This is N-acetyltransferase Eis from Mycobacterium bovis (strain BCG / Pasteur 1173P2).